Here is a 315-residue protein sequence, read N- to C-terminus: Rab effector Noc2 (315 aa).

The 118-residue stretch at 41-158 (QRRKQHLSPA…KRSGAWFYKG (118 aa)) folds into the RabBD domain. The FYVE-type zinc finger occupies 89 to 146 (GNGLSQCLLCGEVLGFLGSSSVFCKDCRKKVCTKCGIEASPGQKRPLWLCKICSEQRE). Cys95, Cys98, Cys112, Cys115, Cys120, Cys123, Cys138, and Cys141 together coordinate Zn(2+). The tract at residues 170-315 (GRADDPHFRP…APAGPSSCLG (146 aa)) is disordered. Basic and acidic residues-rich tracts occupy residues 184-193 (PAEREPRSSE) and 221-240 (LEDR…KPWK). Positions 262 to 275 (GCQSSLASGETGTG) are enriched in polar residues. Low complexity predominate over residues 298-315 (GRAPAADAAPAGPSSCLG).

Recruited to dense-core vesicles through specific interaction with RAB27A in endocrine cells. Interacts with RAB3A, RAB3B, RAB3C and RAB3D. Interacts with ZYX. As to expression, moderate to high levels of expression in thyroid, ovary, stomach, heart, pancreas, skeletal muscle, kidney and liver. Also detected in epithelial cells.

The protein resides in the cytoplasm. Its subcellular location is the cytoplasmic vesicle. The protein localises to the secretory vesicle membrane. Its function is as follows. Rab GTPase effector involved in the late steps of regulated exocytosis, both in endocrine and exocrine cells. Acts as a potential RAB3B effector protein in epithelial cells. The chain is Rab effector Noc2 (RPH3AL) from Homo sapiens (Human).